The primary structure comprises 108 residues: UPF0060 membrane protein SAR2425 (108 aa).

4 helical membrane passes run 5-25 (IFIF…IWLW), 31-51 (SSLV…IATF), 60-80 (VYAA…MVVD), and 86-106 (KYDV…LLPS).

This sequence belongs to the UPF0060 family.

The protein resides in the cell membrane. This is UPF0060 membrane protein SAR2425 from Staphylococcus aureus (strain MRSA252).